The following is a 172-amino-acid chain: Adenine phosphoribosyltransferase (172 aa).

This sequence belongs to the purine/pyrimidine phosphoribosyltransferase family. As to quaternary structure, homodimer.

Its subcellular location is the cytoplasm. The catalysed reaction is AMP + diphosphate = 5-phospho-alpha-D-ribose 1-diphosphate + adenine. It participates in purine metabolism; AMP biosynthesis via salvage pathway; AMP from adenine: step 1/1. Functionally, catalyzes a salvage reaction resulting in the formation of AMP, that is energically less costly than de novo synthesis. This Staphylococcus haemolyticus (strain JCSC1435) protein is Adenine phosphoribosyltransferase.